A 176-amino-acid chain; its full sequence is Protein GrpE (176 aa).

Belongs to the GrpE family. In terms of assembly, homodimer.

It is found in the cytoplasm. Its function is as follows. Participates actively in the response to hyperosmotic and heat shock by preventing the aggregation of stress-denatured proteins, in association with DnaK and GrpE. It is the nucleotide exchange factor for DnaK and may function as a thermosensor. Unfolded proteins bind initially to DnaJ; upon interaction with the DnaJ-bound protein, DnaK hydrolyzes its bound ATP, resulting in the formation of a stable complex. GrpE releases ADP from DnaK; ATP binding to DnaK triggers the release of the substrate protein, thus completing the reaction cycle. Several rounds of ATP-dependent interactions between DnaJ, DnaK and GrpE are required for fully efficient folding. This chain is Protein GrpE, found in Meiothermus ruber.